A 129-amino-acid chain; its full sequence is Small ribosomal subunit protein uS11 (129 aa).

It belongs to the universal ribosomal protein uS11 family. In terms of assembly, part of the 30S ribosomal subunit. Interacts with proteins S7 and S18. Binds to IF-3.

In terms of biological role, located on the platform of the 30S subunit, it bridges several disparate RNA helices of the 16S rRNA. Forms part of the Shine-Dalgarno cleft in the 70S ribosome. This chain is Small ribosomal subunit protein uS11, found in Pseudomonas fluorescens (strain SBW25).